A 242-amino-acid chain; its full sequence is ATP-dependent dethiobiotin synthetase BioD (242 aa).

12–17 contributes to the ATP binding site; sequence EVGKTV. T16 provides a ligand contact to Mg(2+). K37 is an active-site residue. Residue S41 coordinates substrate. ATP-binding positions include D51 and 112 to 115; that span reads EGAG. Mg(2+) contacts are provided by D51 and E112.

Belongs to the dethiobiotin synthetase family. As to quaternary structure, homodimer. Requires Mg(2+) as cofactor.

It localises to the cytoplasm. The enzyme catalyses (7R,8S)-7,8-diammoniononanoate + CO2 + ATP = (4R,5S)-dethiobiotin + ADP + phosphate + 3 H(+). It functions in the pathway cofactor biosynthesis; biotin biosynthesis; biotin from 7,8-diaminononanoate: step 1/2. Catalyzes a mechanistically unusual reaction, the ATP-dependent insertion of CO2 between the N7 and N8 nitrogen atoms of 7,8-diaminopelargonic acid (DAPA, also called 7,8-diammoniononanoate) to form a ureido ring. This is ATP-dependent dethiobiotin synthetase BioD from Bacillus cereus (strain B4264).